Consider the following 284-residue polypeptide: 2-dehydro-3-deoxyphosphooctonate aldolase (284 aa).

This sequence belongs to the KdsA family.

It localises to the cytoplasm. The enzyme catalyses D-arabinose 5-phosphate + phosphoenolpyruvate + H2O = 3-deoxy-alpha-D-manno-2-octulosonate-8-phosphate + phosphate. Its pathway is carbohydrate biosynthesis; 3-deoxy-D-manno-octulosonate biosynthesis; 3-deoxy-D-manno-octulosonate from D-ribulose 5-phosphate: step 2/3. It functions in the pathway bacterial outer membrane biogenesis; lipopolysaccharide biosynthesis. In Aliivibrio fischeri (strain ATCC 700601 / ES114) (Vibrio fischeri), this protein is 2-dehydro-3-deoxyphosphooctonate aldolase.